Here is a 448-residue protein sequence, read N- to C-terminus: Methionine aminopeptidase 2 (448 aa).

A disordered region spans residues 1–47; sequence MTSSVDKVSQKVADVKLGSSKSTKNNKSKGKGKSNKNQVVEDDDEDD. Residues 24 to 34 are compositionally biased toward basic residues; it reads KNNKSKGKGKS. Residue H198 participates in substrate binding. 3 residues coordinate a divalent metal cation: D218, D229, and H298. Residue H306 participates in substrate binding. The a divalent metal cation site is built by E331 and E429.

Belongs to the peptidase M24A family. Methionine aminopeptidase eukaryotic type 2 subfamily. Co(2+) serves as cofactor. Zn(2+) is required as a cofactor. Requires Mn(2+) as cofactor. It depends on Fe(2+) as a cofactor.

It is found in the cytoplasm. It catalyses the reaction Release of N-terminal amino acids, preferentially methionine, from peptides and arylamides.. In terms of biological role, cotranslationally removes the N-terminal methionine from nascent proteins. The N-terminal methionine is often cleaved when the second residue in the primary sequence is small and uncharged (Met-Ala-, Cys, Gly, Pro, Ser, Thr, or Val). This Komagataella phaffii (strain GS115 / ATCC 20864) (Yeast) protein is Methionine aminopeptidase 2.